The chain runs to 481 residues: Ankyrin repeat, SAM and basic leucine zipper domain-containing protein 1 (481 aa).

Over residues 1 to 16 the composition is skewed to gly residues; that stretch reads MASGGLRGLAVAGGGE. The segment at 1–23 is disordered; sequence MASGGLRGLAVAGGGESSDSEDD. Ser17, Ser18, and Ser20 each carry phosphoserine. ANK repeat units follow at residues 45–74, 78–107, 110–144, 148–177, 181–210, and 214–243; these read EKNETFKKALTTGDISLVQELLDSGISVDS, YGWTPLMYAASIANVELVRVLLDRGANASF, DKQTILITACSARGSEEQILKCVELLLSRNADPNV, RLMTPIMYAARDGHPQVVAVLVAHGAEVNT, NGYTALTWAARQGHKNVVLKLLELGANKML, and DGKIPSEIAKRNKHLEIFNFLSLTLNPLEG. The SAM domain occupies 272–334; the sequence is SYTAFGDLEI…KILSALKELE (63 aa).

In terms of assembly, interacts with DDX4, PIWIL1, RANBP9 and TDRD1.

It is found in the cytoplasm. Plays a central role during spermatogenesis by repressing transposable elements and preventing their mobilization, which is essential for the germline integrity. Acts via the piRNA metabolic process, which mediates the repression of transposable elements during meiosis by forming complexes composed of piRNAs and Piwi proteins and governs the methylation and subsequent repression of transposons. Its association with pi-bodies suggests a participation in the primary piRNAs metabolic process. Required prior to the pachytene stage to facilitate the production of multiple types of piRNAs, including those associated with repeats involved in the regulation of retrotransposons. May act by mediating protein-protein interactions during germ cell maturation. This is Ankyrin repeat, SAM and basic leucine zipper domain-containing protein 1 (ASZ1) from Microcebus murinus (Gray mouse lemur).